We begin with the raw amino-acid sequence, 52 residues long: MAVPKKSTSISKKRIRKNIWKKKVYRAALKAFSLAKSLSTGNSKSFFCTTIK.

The protein belongs to the bacterial ribosomal protein bL32 family.

The protein resides in the plastid. It is found in the chloroplast. This chain is Large ribosomal subunit protein bL32c, found in Eucalyptus globulus subsp. globulus (Tasmanian blue gum).